Consider the following 893-residue polypeptide: Alanine--tRNA ligase (893 aa).

Zn(2+) is bound by residues His575, His579, Cys677, and His681.

It belongs to the class-II aminoacyl-tRNA synthetase family. The cofactor is Zn(2+).

Its subcellular location is the cytoplasm. It carries out the reaction tRNA(Ala) + L-alanine + ATP = L-alanyl-tRNA(Ala) + AMP + diphosphate. Functionally, catalyzes the attachment of alanine to tRNA(Ala) in a two-step reaction: alanine is first activated by ATP to form Ala-AMP and then transferred to the acceptor end of tRNA(Ala). Also edits incorrectly charged Ser-tRNA(Ala) and Gly-tRNA(Ala) via its editing domain. The chain is Alanine--tRNA ligase from Synechococcus sp. (strain CC9311).